A 314-amino-acid polypeptide reads, in one-letter code: 2-methoxy-6-polyprenyl-1,4-benzoquinol methylase, mitochondrial (314 aa).

The N-terminal 19 residues, 1 to 19 (MLQSLNRSVRYLSTSIGSR), are a transit peptide targeting the mitochondrion. Residues Thr-109, Asp-154, 186 to 187 (NS), and Ser-203 each bind S-adenosyl-L-methionine.

It belongs to the class I-like SAM-binding methyltransferase superfamily. MenG/UbiE family. In terms of assembly, component of a multi-subunit COQ enzyme complex.

The protein localises to the mitochondrion inner membrane. The enzyme catalyses a 2-methoxy-6-(all-trans-polyprenyl)benzene-1,4-diol + S-adenosyl-L-methionine = a 5-methoxy-2-methyl-3-(all-trans-polyprenyl)benzene-1,4-diol + S-adenosyl-L-homocysteine + H(+). It functions in the pathway cofactor biosynthesis; ubiquinone biosynthesis. Its function is as follows. Methyltransferase required for the conversion of 2-polyprenyl-6-methoxy-1,4-benzoquinol (DDMQH2) to 2-polyprenyl-3-methyl-6-methoxy-1,4-benzoquinol (DMQH2). This Dictyostelium discoideum (Social amoeba) protein is 2-methoxy-6-polyprenyl-1,4-benzoquinol methylase, mitochondrial.